Here is a 686-residue protein sequence, read N- to C-terminus: Forkhead box protein P1 (686 aa).

Composition is skewed to polar residues over residues 1–19 (MMQESGTETKSNGSAIQNG) and 279–292 (IINPHASTNGQLSV). Disordered regions lie at residues 1 to 23 (MMQESGTETKSNGSAIQNGASGG) and 279 to 306 (IINPHASTNGQLSVHTPKRESLSHEEHS). Residues 295–306 (PKRESLSHEEHS) show a composition bias toward basic and acidic residues. The C2H2-type zinc finger occupies 315 to 340 (GVCKWPGCEAVCEDFQSFLKHLNSEH). The interval 357–378 (VQQLELQLAKDKERLQAMMTHL) is leucine-zipper. Residues 391–395 (PLNLV) form a CTBP1-binding region. The span at 403–412 (TASEASPQSL) shows a compositional bias: polar residues. Residues 403 to 440 (TASEASPQSLPHTPTTPTAPITPVTQGPSVITTTSMHN) are disordered. The segment covering 413–427 (PHTPTTPTAPITPVT) has biased composition (low complexity). The span at 428–439 (QGPSVITTTSMH) shows a compositional bias: polar residues. The segment at residues 474–564 (RPPFTYASLI…PQKISGNPSL (91 aa)) is a DNA-binding region (fork-head). The segment at 619 to 686 (MEHTNSNGSD…EDEPVNEDIE (68 aa)) is disordered. The segment covering 621–632 (HTNSNGSDSSPG) has biased composition (polar residues). Positions 676 to 686 (YEDEPVNEDIE) are enriched in acidic residues.

The protein resides in the nucleus. Its function is as follows. Transcriptional repressor. This chain is Forkhead box protein P1 (FOXP1), found in Gallus gallus (Chicken).